Consider the following 498-residue polypeptide: Lysine--tRNA ligase (498 aa).

Mg(2+) is bound by residues glutamate 408 and glutamate 415.

Belongs to the class-II aminoacyl-tRNA synthetase family. In terms of assembly, homodimer. It depends on Mg(2+) as a cofactor.

It localises to the cytoplasm. The enzyme catalyses tRNA(Lys) + L-lysine + ATP = L-lysyl-tRNA(Lys) + AMP + diphosphate. This Listeria welshimeri serovar 6b (strain ATCC 35897 / DSM 20650 / CCUG 15529 / CIP 8149 / NCTC 11857 / SLCC 5334 / V8) protein is Lysine--tRNA ligase.